The primary structure comprises 449 residues: Glutamyl-tRNA reductase (449 aa).

Substrate contacts are provided by residues 48-51 (TCNR), Ser-99, 104-106 (EDQ), and Gln-110. Cys-49 (nucleophile) is an active-site residue. 179–184 (GAGEIG) lines the NADP(+) pocket.

This sequence belongs to the glutamyl-tRNA reductase family. Homodimer.

It carries out the reaction (S)-4-amino-5-oxopentanoate + tRNA(Glu) + NADP(+) = L-glutamyl-tRNA(Glu) + NADPH + H(+). It participates in porphyrin-containing compound metabolism; protoporphyrin-IX biosynthesis; 5-aminolevulinate from L-glutamyl-tRNA(Glu): step 1/2. Catalyzes the NADPH-dependent reduction of glutamyl-tRNA(Glu) to glutamate 1-semialdehyde (GSA). This is Glutamyl-tRNA reductase from Methanosarcina barkeri (strain Fusaro / DSM 804).